The sequence spans 179 residues: Large ribosomal subunit protein uL6 (179 aa).

This sequence belongs to the universal ribosomal protein uL6 family. As to quaternary structure, part of the 50S ribosomal subunit.

Functionally, this protein binds to the 23S rRNA, and is important in its secondary structure. It is located near the subunit interface in the base of the L7/L12 stalk, and near the tRNA binding site of the peptidyltransferase center. The sequence is that of Large ribosomal subunit protein uL6 from Acidothermus cellulolyticus (strain ATCC 43068 / DSM 8971 / 11B).